Consider the following 4644-residue polypeptide: Cytoplasmic dynein 1 heavy chain 1 (4644 aa).

At Ser2 the chain carries N-acetylserine. Residues 2–1865 (SEPGGGEDGS…SIQMANAKFN (1864 aa)) are stem. Coiled coils occupy residues 48 to 69 (AALE…FLSD), 179 to 200 (SVEK…NIEI), 453 to 476 (AHRK…QLRA), and 541 to 564 (TEAW…RITA). Ser68 is subject to Phosphoserine. An interaction with DYNC1I2 region spans residues 446 to 701 (MVWRINPAHR…NTQEIFDDWA (256 aa)). Residues 649-800 (AKQIDRQLTA…EKVEERNTIS (152 aa)) are interaction with DYNC1LI2. Lys1123 is modified (N6-acetyllysine). A coiled-coil region spans residues 1169–1201 (TYVQSLKRKIKQFEKQVELYRNGQRLLEKQRFQ). Ser1228 is modified (phosphoserine). Coiled-coil stretches lie at residues 1229-1250 (AIQQ…AVES) and 1355-1371 (RKLR…LKNF). 4 AAA regions span residues 1866–2097 (YGFE…VLVS), 2178–2450 (EELK…LTRL), 2554–2803 (EVET…WVRG), and 2897–3166 (VFYE…GGRT). Residues 1904–1911 (GPAGTGKT) and 2222–2229 (GPSGSGKS) contribute to the ATP site. The interval 2388 to 2408 (GEDEAQRRRKGKEDEGEEAAS) is disordered. ATP-binding positions include 2593-2600 (GPPGSGKT) and 2935-2942 (GVSGAGKT). 3 coiled-coil regions span residues 3187–3273 (EKRS…ADKQ), 3394–3498 (AIAQ…KNQM), and 3735–3798 (EFQL…VSQQ). The interval 3187–3498 (EKRSELEEQQ…KTSETFKNQM (312 aa)) is stalk. N6-acetyllysine is present on Lys3478. AAA regions lie at residues 3551–3780 (LSNA…EVTR) and 4003–4219 (AHMF…TVDT). A Phosphoserine modification is found at Ser4160. An N6-acetyllysine modification is found at Lys4281. Residue Thr4364 is modified to Phosphothreonine. A Phosphoserine modification is found at Ser4366.

It belongs to the dynein heavy chain family. As to quaternary structure, homodimer. The cytoplasmic dynein 1 complex consists of two catalytic heavy chains (HCs) and a number of non-catalytic subunits presented by intermediate chains (ICs), light intermediate chains (LICs) and light chains (LCs); the composition seems to vary in respect to the IC, LIC and LC composition. The heavy chain homodimer serves as a scaffold for the probable homodimeric assembly of the respective non-catalytic subunits. The ICs and LICs bind directly to the HC dimer and dynein LCs assemble on the IC dimer. Interacts with DYNC1LI1; DYNC1LI1 and DYNC1LI2 bind mutually exclusive to DYNC1H1. Interacts with DYNC1LI2; DYNC1LI1 and DYNC1LI2 bind mutually exclusive to DYNC1H1. Interacts with DYNC1I2. Interacts with BICD2. Interacts with DNALI1.

It is found in the cytoplasm. It localises to the cytoskeleton. In terms of biological role, cytoplasmic dynein 1 acts as a motor for the intracellular retrograde motility of vesicles and organelles along microtubules. Dynein has ATPase activity; the force-producing power stroke is thought to occur on release of ADP. Plays a role in mitotic spindle assembly and metaphase plate congression. This chain is Cytoplasmic dynein 1 heavy chain 1 (Dync1h1), found in Mus musculus (Mouse).